A 404-amino-acid polypeptide reads, in one-letter code: MTTVPDLESDSFHVDWYRTYAELRETAPVTPVRFLGQDAWLVTGYDEAKAALSDLRLSSDPKKKYPGVEVEFPAYLGFPEDVRNYFATNMGTSDPPTHTRLRKLVSQEFTVRRVEAMRPRVEQITAELLDEVGDSGVVDIVDRFAHPLPIKVICELLGVDEKYRGEFGRWSSEILVMDPERAEQRGQAAREVVNFILDLVERRRTEPGDDLLSALIRVQDDDDGRLSADELTSIALVLLLAGFEASVSLIGIGTYLLLTHPDQLALVRRDPSALPNAVEEILRYIAPPETTTRFAAEEVEIGGVAIPQYSTVLVANGAANRDPKQFPDPHRFDVTRDTRGHLSFGQGIHFCMGRPLAKLEGEVALRALFGRFPALSLGIDADDVVWRRSLLLRGIDHLPVRLDG.

Heme is bound at residue Cys-351.

The protein belongs to the cytochrome P450 family. Heme is required as a cofactor.

The protein localises to the cytoplasm. The enzyme catalyses 6-deoxyerythronolide B + 2 reduced [2Fe-2S]-[ferredoxin] + O2 + 2 H(+) = erythronolide B + 2 oxidized [2Fe-2S]-[ferredoxin] + H2O. Its pathway is antibiotic biosynthesis; erythromycin biosynthesis. In terms of biological role, catalyzes the conversion of 6-deoxyerythronolide B (6-DEB) to erythronolide B (EB) by the insertion of an oxygen at the 6S position of 6-DEB. Requires the participation of a ferredoxin and a ferredoxin reductase for the transfer of electrons from NADPH to the monooxygenase. The polypeptide is 6-deoxyerythronolide B hydroxylase (Saccharopolyspora erythraea (strain ATCC 11635 / DSM 40517 / JCM 4748 / NBRC 13426 / NCIMB 8594 / NRRL 2338)).